Here is a 560-residue protein sequence, read N- to C-terminus: Beta-hexosaminidase subunit B1 (560 aa).

The N-terminal stretch at 1–25 (MIILKRNIVFLLIIIIVLGIFIATS) is a signal peptide. N-linked (GlcNAc...) asparagine glycans are attached at residues N59, N69, N81, N99, N161, N293, and N346. The active-site Proton donor is the E359. N-linked (GlcNAc...) asparagine glycans are attached at residues N366, N436, N472, and N547.

It belongs to the glycosyl hydrolase 20 family.

It localises to the lysosome. The enzyme catalyses Hydrolysis of terminal non-reducing N-acetyl-D-hexosamine residues in N-acetyl-beta-D-hexosaminides.. Functionally, responsible for the degradation of GM2 gangliosides, and a variety of other molecules containing terminal N-acetyl hexosamines. This Dictyostelium discoideum (Social amoeba) protein is Beta-hexosaminidase subunit B1 (hexb1).